Consider the following 283-residue polypeptide: DNA repair protein RecO (283 aa).

The segment covering 254-264 has biased composition (polar residues); it reads SSPASVGSSAT. Positions 254-283 are disordered; that stretch reads SSPASVGSSATRYFAQGDTDENDRDPPGAR.

It belongs to the RecO family.

In terms of biological role, involved in DNA repair and RecF pathway recombination. The sequence is that of DNA repair protein RecO from Roseiflexus sp. (strain RS-1).